Reading from the N-terminus, the 374-residue chain is UDP-N-acetylglucosamine--N-acetylmuramyl-(pentapeptide) pyrophosphoryl-undecaprenol N-acetylglucosamine transferase (374 aa).

UDP-N-acetyl-alpha-D-glucosamine-binding positions include 13–15, asparagine 124, arginine 165, serine 193, and glutamine 294; that span reads TGG.

It belongs to the glycosyltransferase 28 family. MurG subfamily.

The protein resides in the cell inner membrane. It carries out the reaction di-trans,octa-cis-undecaprenyl diphospho-N-acetyl-alpha-D-muramoyl-L-alanyl-D-glutamyl-meso-2,6-diaminopimeloyl-D-alanyl-D-alanine + UDP-N-acetyl-alpha-D-glucosamine = di-trans,octa-cis-undecaprenyl diphospho-[N-acetyl-alpha-D-glucosaminyl-(1-&gt;4)]-N-acetyl-alpha-D-muramoyl-L-alanyl-D-glutamyl-meso-2,6-diaminopimeloyl-D-alanyl-D-alanine + UDP + H(+). It functions in the pathway cell wall biogenesis; peptidoglycan biosynthesis. In terms of biological role, cell wall formation. Catalyzes the transfer of a GlcNAc subunit on undecaprenyl-pyrophosphoryl-MurNAc-pentapeptide (lipid intermediate I) to form undecaprenyl-pyrophosphoryl-MurNAc-(pentapeptide)GlcNAc (lipid intermediate II). The chain is UDP-N-acetylglucosamine--N-acetylmuramyl-(pentapeptide) pyrophosphoryl-undecaprenol N-acetylglucosamine transferase from Rhizobium etli (strain ATCC 51251 / DSM 11541 / JCM 21823 / NBRC 15573 / CFN 42).